A 372-amino-acid chain; its full sequence is Tetraacyldisaccharide 4'-kinase (372 aa).

65–72 (TVGGTGKT) is a binding site for ATP. A disordered region spans residues 351–372 (QSTATGMADGLDKEHQDGQPAA). Positions 360–372 (GLDKEHQDGQPAA) are enriched in basic and acidic residues.

This sequence belongs to the LpxK family.

The enzyme catalyses a lipid A disaccharide + ATP = a lipid IVA + ADP + H(+). It functions in the pathway glycolipid biosynthesis; lipid IV(A) biosynthesis; lipid IV(A) from (3R)-3-hydroxytetradecanoyl-[acyl-carrier-protein] and UDP-N-acetyl-alpha-D-glucosamine: step 6/6. Transfers the gamma-phosphate of ATP to the 4'-position of a tetraacyldisaccharide 1-phosphate intermediate (termed DS-1-P) to form tetraacyldisaccharide 1,4'-bis-phosphate (lipid IVA). The polypeptide is Tetraacyldisaccharide 4'-kinase (Cupriavidus metallidurans (strain ATCC 43123 / DSM 2839 / NBRC 102507 / CH34) (Ralstonia metallidurans)).